Reading from the N-terminus, the 1203-residue chain is Transmembrane channel-like protein 2 (1203 aa).

Disordered stretches follow at residues 1 to 39 and 64 to 90; these read MPKS…IDSR and PHTR…EASK. Residues 73 to 86 show a composition bias toward acidic residues; that stretch reads FDDDDDEFDEEDDK. The chain crosses the membrane as a helical span at residues 191–213; the sequence is VLGVNITITFIMCMFVVIPEWLA. A glycan (N-linked (GlcNAc...) asparagine) is linked at Asn-225. 6 helical membrane passes run 276–298, 369–391, 406–428, 441–463, 665–687, and 714–736; these read YRVP…FIIL, FVAR…WAIM, ATAI…LGKI, LGRV…MLQL, MIWL…LIIL, and FFFA…VIAS. Asn-748 is a glycosylation site (N-linked (GlcNAc...) asparagine). A helical membrane pass occupies residues 780–802; it reads IIIPVLVLLSLVIYFLIAMVTGL. Disordered stretches follow at residues 826 to 908, 927 to 1039, 1059 to 1087, and 1112 to 1203; these read ELAG…SLPP, KYGR…IEKQ, ATVE…HEPL, and NDET…SDND. Residues 865–874 are compositionally biased toward polar residues; it reads NRSTAKSVSG. Low complexity predominate over residues 898–908; that stretch reads DSESTTSSLPP. The span at 927 to 945 shows a compositional bias: basic and acidic residues; it reads KYGRHDDIEMEEGGGRLRE. Composition is skewed to low complexity over residues 973 to 997 and 1022 to 1035; these read QSFD…PSNS and SASS…PSSS. Over residues 1061–1076 the composition is skewed to polar residues; the sequence is VENSSQDPTRPPSTDD. Composition is skewed to basic and acidic residues over residues 1133-1147 and 1172-1203; these read SPRE…KDQQ and PPSE…SDND.

This sequence belongs to the TMC family.

The protein resides in the membrane. Functionally, probable ion channel. This chain is Transmembrane channel-like protein 2 (tmc-2), found in Caenorhabditis elegans.